The sequence spans 45 residues: Large ribosomal subunit protein bL34 (45 aa).

The protein belongs to the bacterial ribosomal protein bL34 family.

This Streptomyces avermitilis (strain ATCC 31267 / DSM 46492 / JCM 5070 / NBRC 14893 / NCIMB 12804 / NRRL 8165 / MA-4680) protein is Large ribosomal subunit protein bL34.